The sequence spans 974 residues: Hexokinase-1 (974 aa).

Positions Met1 to Leu42 are disordered. A mitochondrial-binding peptide (MBP) region spans residues Cys57–Glu66. 2 consecutive Hexokinase domains span residues Pro72 to Ala514 and Ala520 to Ala962. ATP is bound by residues Arg86 and Asp140 to Ser145. Residues Asp129–Val263 form a hexokinase small subdomain 1 region. Asp140 to Arg147 serves as a coordination point for D-glucose 6-phosphate. D-glucose is bound by residues Ser211, Thr228–Lys229, and Asn264–Asp265. The segment at Asn264 to Ser503 is hexokinase large subdomain 1. Residues Asp265 and Thr288 each contribute to the D-glucose 6-phosphate site. D-glucose is bound by residues Asn291, Glu316, and Gln347 to Glu350. Ser393 is modified (phosphoserine). Asp469–Ser471 provides a ligand contact to D-glucose 6-phosphate. Arg481–Arg482 is a binding site for ATP. D-glucose 6-phosphate is bound by residues Ser505 and Asp588–Thr592. Residues Asp577–Val711 form a hexokinase small subdomain 2 region. Position 588–593 (Asp588–Asn593) interacts with ATP. Residues Ser659–Phe660, Thr676–Lys677, and Asn712–Asp713 each bind D-glucose. The tract at residues Asn712 to Asp951 is hexokinase large subdomain 2. The D-glucose 6-phosphate site is built by Asp713 and Thr736. Residue Thr736 coordinates ATP. Residues Ser738–Asn739, Glu764, and Glu798 contribute to the D-glucose site. Residues Gly803–Met804, Thr840–Ser844, and Thr919–Leu923 each bind ATP. Residues Asp917–Thr919 and Ser953 contribute to the D-glucose 6-phosphate site.

The protein belongs to the hexokinase family. Monomer. Interacts with RABL2/RABL2A; binds preferentially to GTP-bound RABL2. Interacts with VDAC1. The HK1-VDAC1 complex interacts with ATF2. Interacts (via N-terminal spermatogenic cell-specific region) with PFKM isoform 2 and isoform 3 (via C-terminus). Interacts with SMAD5. Tyrosine-phosphorylated. In terms of tissue distribution, in rapidly growing tumor cells exhibiting high glucose catabolic rates, isoform HK1 is markedly elevated. Isoform HK1-SA, isoform HK1-SB and isoform HK1-SC are found only in spermatogenic cells. Isoform HK1-SC is detected in round spermatids, condensing spermatids and mature sperm where it is found in the head membranes, mitochondria of the midpiece and the fibrous sheath of the flagellum. Expressed within the principal piece and midpiece of sperm tail (at protein level).

The protein localises to the mitochondrion outer membrane. It is found in the cytoplasm. The protein resides in the cytosol. It localises to the membrane. It carries out the reaction a D-hexose + ATP = a D-hexose 6-phosphate + ADP + H(+). The catalysed reaction is D-fructose + ATP = D-fructose 6-phosphate + ADP + H(+). It catalyses the reaction D-glucose + ATP = D-glucose 6-phosphate + ADP + H(+). The enzyme catalyses D-mannose + ATP = D-mannose 6-phosphate + ADP + H(+). It carries out the reaction D-glucosamine + ATP = D-glucosamine 6-phosphate + ADP + H(+). Its pathway is carbohydrate metabolism; hexose metabolism. The protein operates within carbohydrate degradation; glycolysis; D-glyceraldehyde 3-phosphate and glycerone phosphate from D-glucose: step 1/4. With respect to regulation, hexokinase is an allosteric enzyme inhibited by its product D-glucose 6-phosphate. Hexokinase activity is inhibited by N-acetyl-D-glucosamine. In terms of biological role, catalyzes the phosphorylation of various hexoses, such as D-glucose, D-glucosamine, D-fructose, D-mannose and 2-deoxy-D-glucose, to hexose 6-phosphate (D-glucose 6-phosphate, D-glucosamine 6-phosphate, D-fructose 6-phosphate, D-mannose 6-phosphate and 2-deoxy-D-glucose 6-phosphate, respectively). Does not phosphorylate N-acetyl-D-glucosamine. Mediates the initial step of glycolysis by catalyzing phosphorylation of D-glucose to D-glucose 6-phosphate. Involved in innate immunity and inflammation by acting as a pattern recognition receptor for bacterial peptidoglycan. When released in the cytosol, N-acetyl-D-glucosamine component of bacterial peptidoglycan inhibits the hexokinase activity of HK1 and causes its dissociation from mitochondrial outer membrane, thereby activating the NLRP3 inflammasome. This chain is Hexokinase-1, found in Mus musculus (Mouse).